The chain runs to 432 residues: uncharacterized protein (432 aa).

This sequence to M.jannaschii MJ0977.

This is an uncharacterized protein from Methanocaldococcus jannaschii (strain ATCC 43067 / DSM 2661 / JAL-1 / JCM 10045 / NBRC 100440) (Methanococcus jannaschii).